A 797-amino-acid polypeptide reads, in one-letter code: uncharacterized protein (797 aa).

This is an uncharacterized protein from Treponema pallidum (strain Nichols).